The sequence spans 205 residues: Large ribosomal subunit protein uL4 (205 aa).

It belongs to the universal ribosomal protein uL4 family. In terms of assembly, part of the 50S ribosomal subunit.

In terms of biological role, one of the primary rRNA binding proteins, this protein initially binds near the 5'-end of the 23S rRNA. It is important during the early stages of 50S assembly. It makes multiple contacts with different domains of the 23S rRNA in the assembled 50S subunit and ribosome. Forms part of the polypeptide exit tunnel. This Ruegeria sp. (strain TM1040) (Silicibacter sp.) protein is Large ribosomal subunit protein uL4.